Consider the following 241-residue polypeptide: Beta-nerve growth factor (241 aa).

A signal peptide spans 1 to 18 (MSMLFYTLITAFLIGVQA). Positions 19 to 121 (EPYTDSNVPE…SFNRTHRSKR (103 aa)) are excised as a propeptide. Residues Asn-69, Asn-114, and Asn-166 are each glycosylated (N-linked (GlcNAc...) asparagine). Disulfide bonds link Cys-136–Cys-201, Cys-179–Cys-229, and Cys-189–Cys-231. The a 1-acyl-sn-glycero-3-phospho-(1D-myo-inositol) site is built by Tyr-173 and Lys-209. An a 1-acyl-sn-glycero-3-phospho-L-serine-binding site is contributed by Lys-209.

It belongs to the NGF-beta family. In terms of assembly, homodimer. The homodimer interacts with a single NTRK1 chain. The homodimer interacts with a single NGFR chain. The NGF dimer interacts with a single SORCS2 chain (via extracellular domain). The NGF precursor (proNGF) binds to a receptor complex formed by SORT1 and NGFR, which leads to NGF endocytosis. Both mature NGF and the immature NGF precursor (proNGF) interact with SORCS2 and with the heterodimer formed by SORCS2 and NGFR (via extracellular domains). The NGF precursor (proNGF) has much higher affinity for SORCS2 than mature NGF. The NGF precursor (proNGF) has much higher affinity for SORT1 than mature NGF. Interacts with ADAM10 in a divalent cation-dependent manner. Interacts with SORCS3. In terms of tissue distribution, detected in the granule and pyramidal cell layer in the hippocampus.

The protein resides in the secreted. The protein localises to the endosome lumen. Its function is as follows. Nerve growth factor is important for the development and maintenance of the sympathetic and sensory nervous systems. Extracellular ligand for the NTRK1 and NGFR receptors, activates cellular signaling cascades to regulate neuronal proliferation, differentiation and survival. The immature NGF precursor (proNGF) functions as a ligand for the heterodimeric receptor formed by SORCS2 and NGFR, and activates cellular signaling cascades that lead to inactivation of RAC1 and/or RAC2, reorganization of the actin cytoskeleton and neuronal growth cone collapse. In contrast to mature NGF, the precursor form (proNGF) promotes neuronal apoptosis (in vitro). Inhibits metalloproteinase-dependent proteolysis of platelet glycoprotein VI. Binds lysophosphatidylinositol and lysophosphatidylserine between the two chains of the homodimer. The lipid-bound form promotes histamine relase from mast cells, contrary to the lipid-free form. The sequence is that of Beta-nerve growth factor (Ngf) from Rattus norvegicus (Rat).